The chain runs to 431 residues: Adenosylhomocysteinase (431 aa).

Residues Thr-56, Asp-131, and Glu-156 each contribute to the substrate site. 157–159 (TTT) contacts NAD(+). Lys-186 and Asp-190 together coordinate substrate. Residues Asn-191, 222–227 (GDVGKG), Glu-243, 299–301 (IGH), and Asn-345 contribute to the NAD(+) site.

The protein belongs to the adenosylhomocysteinase family. Homotetramer. NAD(+) is required as a cofactor.

The catalysed reaction is S-adenosyl-L-homocysteine + H2O = L-homocysteine + adenosine. It participates in amino-acid biosynthesis; L-homocysteine biosynthesis; L-homocysteine from S-adenosyl-L-homocysteine: step 1/1. Its function is as follows. Adenosylhomocysteine is a competitive inhibitor of S-adenosyl-L-methionine-dependent methyl transferase reactions; therefore adenosylhomocysteinase may play a key role in the control of methylations via regulation of the intracellular concentration of adenosylhomocysteine. This Dictyostelium discoideum (Social amoeba) protein is Adenosylhomocysteinase (sahA).